A 25-amino-acid chain; its full sequence is Metallothionein (25 aa).

Positions 3, 5, 11, 13, 18, 20, and 23 each coordinate Cu(+).

This sequence belongs to the metallothionein superfamily. Type 8 family.

Its function is as follows. The metallothioneins are involved in the cellular sequestration of toxic metal ions. Binds six copper (cuprous) ions. This is Metallothionein from Agaricus bisporus (White button mushroom).